A 73-amino-acid chain; its full sequence is Translation initiation factor IF-1 (73 aa).

The S1-like domain maps to 1–73 (MAKKEGALEL…TRGRIVYRHK (73 aa)).

This sequence belongs to the IF-1 family. Component of the 30S ribosomal translation pre-initiation complex which assembles on the 30S ribosome in the order IF-2 and IF-3, IF-1 and N-formylmethionyl-tRNA(fMet); mRNA recruitment can occur at any time during PIC assembly.

The protein resides in the cytoplasm. One of the essential components for the initiation of protein synthesis. Stabilizes the binding of IF-2 and IF-3 on the 30S subunit to which N-formylmethionyl-tRNA(fMet) subsequently binds. Helps modulate mRNA selection, yielding the 30S pre-initiation complex (PIC). Upon addition of the 50S ribosomal subunit IF-1, IF-2 and IF-3 are released leaving the mature 70S translation initiation complex. This Cutibacterium acnes (strain DSM 16379 / KPA171202) (Propionibacterium acnes) protein is Translation initiation factor IF-1.